Consider the following 618-residue polypeptide: Tyrosine-protein kinase ZAP-70 (618 aa).

One can recognise an SH2 1 domain in the interval 10-102 (FFYGSISRAE…GLPCNLRKPC (93 aa)). The interdomain A stretch occupies residues 103 to 162 (NRPPGLEPQPGVFDCLRDAMVRDYVRQTWKLEGDALEQAIISQAPQVEKLIATTAHERMP). The SH2 2 domain maps to 163–254 (WYHSSLTREE…GLIYRLKEVC (92 aa)). Tyrosine 248 carries the phosphotyrosine modification. The interval 255 to 336 (PNSSASAAVA…KKLFLKRENL (82 aa)) is interdomain B. The disordered stretch occupies residues 270–320 (AHPSTFTQPQRRVDTLNSDGYTPEPARLASSTDKPRPMPMDTSVYESPYSD). Residues 273-289 (STFTQPQRRVDTLNSDG) show a composition bias toward polar residues. Serine 287 carries the post-translational modification Phosphoserine. Tyrosine 290 bears the Phosphotyrosine mark. Residue tyrosine 314 is modified to Phosphotyrosine; by LCK. Phosphotyrosine is present on tyrosine 318. The region spanning 337-597 (LVADIELGCG…VEQRMRNYYY (261 aa)) is the Protein kinase domain. ATP is bound by residues 343–351 (LGCGNFGSV) and lysine 368. Catalysis depends on aspartate 460, which acts as the Proton acceptor. A phosphotyrosine mark is found at tyrosine 491 and tyrosine 492. Lysine 543 is covalently cross-linked (Glycyl lysine isopeptide (Lys-Gly) (interchain with G-Cter in ubiquitin)).

It belongs to the protein kinase superfamily. Tyr protein kinase family. SYK/ZAP-70 subfamily. As to quaternary structure, interacts with CD247/CD3Z; this interaction docks ZAP70 at the stimulated TCR. Interacts with NFAM1. Interacts with adapter protein SLA; this interaction negatively regulates T-cell receptor signaling. Interacts with VAV1. Interacts with CBL; this interaction promotes ubiquitination, internalization and subsequent degradation of CD247/CD3Z. Identified in a complex with CBL and UBE2L3. Interacts with SHB. Interacts with adapter protein SLA2; this interaction negatively regulates T-cell receptor signaling. Interacts with CBLB. Interacts (via SH2 domains) with RHOH; this interaction regulates ZAP70 subcellular localization. Interacts with DEF6. Interacts (ubiquitinated form) with OTUD7B and UBASH3B. Phosphorylated on tyrosine residues upon T-cell antigen receptor (TCR) stimulation. Phosphorylation of Tyr-314 and Tyr-314 are essential for ZAP70 positive function on T-lymphocyte activation whereas Tyr-290 has a negative regulatory role. Within the C-terminal kinase domain, Tyr-491 and Tyr-492 are phosphorylated after TCR induction, Tyr-491 playing a negative regulatory role and Tyr-492 a positive. Tyr-492 is dephosphorylated by PTN22. Post-translationally, ubiquitinated in response to T cell activation. Deubiquitinated by OTUD7B. Isoform 1 and isoform 2 are expressed in thymus, spleen and lymph nodes.

The protein localises to the cytoplasm. The protein resides in the cell membrane. It catalyses the reaction L-tyrosyl-[protein] + ATP = O-phospho-L-tyrosyl-[protein] + ADP + H(+). With respect to regulation, activated by phosphorylation at Tyr-492 in the activation loop. Tyrosine kinase that plays an essential role in regulation of the adaptive immune response. Regulates motility, adhesion and cytokine expression of mature T-cells, as well as thymocyte development. Also contributes to the development and activation of primary B-lymphocytes. When antigen presenting cells (APC) activate T-cell receptor (TCR), a serie of phosphorylations lead to the recruitment of ZAP70 to the doubly phosphorylated TCR component CD3Z through ITAM motif at the plasma membrane. This recruitment serves to localization to the stimulated TCR and to relieve its autoinhibited conformation. Release of ZAP70 active conformation is further stabilized by phosphorylation mediated by LCK. Subsequently, ZAP70 phosphorylates at least 2 essential adapter proteins: LAT and LCP2. In turn, a large number of signaling molecules are recruited and ultimately lead to lymphokine production, T-cell proliferation and differentiation. Furthermore, ZAP70 controls cytoskeleton modifications, adhesion and mobility of T-lymphocytes, thus ensuring correct delivery of effectors to the APC. ZAP70 is also required for TCR-CD3Z internalization and degradation through interaction with the E3 ubiquitin-protein ligase CBL and adapter proteins SLA and SLA2. Thus, ZAP70 regulates both T-cell activation switch on and switch off by modulating TCR expression at the T-cell surface. During thymocyte development, ZAP70 promotes survival and cell-cycle progression of developing thymocytes before positive selection (when cells are still CD4/CD8 double negative). Additionally, ZAP70-dependent signaling pathway may also contribute to primary B-cells formation and activation through B-cell receptor (BCR). In Mus musculus (Mouse), this protein is Tyrosine-protein kinase ZAP-70 (Zap70).